Here is a 165-residue protein sequence, read N- to C-terminus: MSKKAIYPGTFDPFTNGHLDVLERALNIFEHVDVVLAENSQKQTLFSVEERFDMVREVVRDLPNVSVDVLREGLLADYARQAGASAIVRGVRQVKDFEYEFQMSLLNRHLYPEVTTVFLMPNVKYTYVASTIIREVSMLGGDVSKFVHPYVLDQLSRKRAERRAH.

Residue T10 participates in substrate binding. Residues 10 to 11 (TF) and H18 contribute to the ATP site. Positions 42, 75, and 89 each coordinate substrate. Residues 90–92 (GVR), E100, and 125–131 (YTYVAST) each bind ATP.

Belongs to the bacterial CoaD family. As to quaternary structure, homohexamer. Mg(2+) serves as cofactor.

It is found in the cytoplasm. The enzyme catalyses (R)-4'-phosphopantetheine + ATP + H(+) = 3'-dephospho-CoA + diphosphate. The protein operates within cofactor biosynthesis; coenzyme A biosynthesis; CoA from (R)-pantothenate: step 4/5. Functionally, reversibly transfers an adenylyl group from ATP to 4'-phosphopantetheine, yielding dephospho-CoA (dPCoA) and pyrophosphate. The chain is Phosphopantetheine adenylyltransferase from Chlorobaculum tepidum (strain ATCC 49652 / DSM 12025 / NBRC 103806 / TLS) (Chlorobium tepidum).